Here is a 302-residue protein sequence, read N- to C-terminus: Ribosomal RNA small subunit methyltransferase H (302 aa).

S-adenosyl-L-methionine-binding positions include 36–38 (GGH), D56, F84, D99, and Q106.

It belongs to the methyltransferase superfamily. RsmH family.

It is found in the cytoplasm. The enzyme catalyses cytidine(1402) in 16S rRNA + S-adenosyl-L-methionine = N(4)-methylcytidine(1402) in 16S rRNA + S-adenosyl-L-homocysteine + H(+). Specifically methylates the N4 position of cytidine in position 1402 (C1402) of 16S rRNA. The chain is Ribosomal RNA small subunit methyltransferase H from Christiangramia forsetii (strain DSM 17595 / CGMCC 1.15422 / KT0803) (Gramella forsetii).